We begin with the raw amino-acid sequence, 305 residues long: tRNA dimethylallyltransferase (305 aa).

ATP is bound at residue 8–15 (GPTAVGKT). Position 10-15 (10-15 (TAVGKT)) interacts with substrate. The segment at 33–36 (DSRQ) is interaction with substrate tRNA.

The protein belongs to the IPP transferase family. Monomer. Requires Mg(2+) as cofactor.

It catalyses the reaction adenosine(37) in tRNA + dimethylallyl diphosphate = N(6)-dimethylallyladenosine(37) in tRNA + diphosphate. Catalyzes the transfer of a dimethylallyl group onto the adenine at position 37 in tRNAs that read codons beginning with uridine, leading to the formation of N6-(dimethylallyl)adenosine (i(6)A). The sequence is that of tRNA dimethylallyltransferase from Thermotoga neapolitana (strain ATCC 49049 / DSM 4359 / NBRC 107923 / NS-E).